The primary structure comprises 603 residues: Coagulation factor XII (603 aa).

The N-terminal stretch at 1–18 is a signal peptide; the sequence is GRLLLGSLLVSLESALSA. The 49-residue stretch at 41-89 folds into the Fibronectin type-II domain; that stretch reads VTGEPCYFPFQYNRQLYHHCIHKGRPGPRPWCATTPNFDQDQQWAYCLE. 20 disulfide bridges follow: Cys-46–Cys-72, Cys-60–Cys-87, Cys-97–Cys-109, Cys-103–Cys-118, Cys-120–Cys-129, Cys-134–Cys-162, Cys-160–Cys-169, Cys-177–Cys-188, Cys-182–Cys-197, Cys-199–Cys-208, Cys-216–Cys-294, Cys-237–Cys-276, Cys-265–Cys-289, Cys-345–Cys-472, Cys-383–Cys-399, Cys-391–Cys-461, Cys-422–Cys-425, Cys-488–Cys-557, Cys-520–Cys-536, and Cys-547–Cys-578. The region spanning 93–130 is the EGF-like 1 domain; the sequence is VKDHCSKHNPCQRGGICVNTLSSPHCLCPDHLTGKHCQ. Positions 132-172 constitute a Fibronectin type-I domain; that stretch reads EKCFEPQLHRFFHENEIWFRTGPAGVAKCHCKGPDAHCKQM. An EGF-like 2 domain is found at 173-209; sequence HSQECQTNPCLNGGRCLEVEGHHLCDCPMGYTGPFCD. The 79-residue stretch at 216–294 folds into the Kringle domain; that stretch reads CYEGRGVSYR…SWEYCDLAQC (79 aa). 2 N-linked (GlcNAc...) asparagine glycosylation sites follow: Asn-248 and Asn-270. A Peptidase S1 domain is found at 359–602; it reads IVGGLVALPG…YLTWIQKHTA (244 aa). Catalysis depends on His-398, which acts as the Charge relay system. N-linked (GlcNAc...) asparagine glycosylation occurs at Asn-419. Asp-447 serves as the catalytic Charge relay system. Catalysis depends on Ser-551, which acts as the Charge relay system.

Belongs to the peptidase S1 family. As to quaternary structure, interacts with HRG; the interaction, which is enhanced in the presence of zinc ions and inhibited by heparin-binding, inhibits factor XII autoactivation and contact-initiated coagulation. Post-translationally, O- and N-glycosylated.

It is found in the secreted. The catalysed reaction is Selective cleavage of Arg-|-Ile bonds in factor VII to form factor VIIa and factor XI to form factor XIa.. Activity is promoted in the presence of negatively charged surfaces. Functionally, factor XII is a serum glycoprotein that participates in the initiation of blood coagulation, fibrinolysis, and the generation of bradykinin and angiotensin. Prekallikrein is cleaved by factor XII to form kallikrein, which then cleaves factor XII first to alpha-factor XIIa and then trypsin cleaves it to beta-factor XIIa. Alpha-factor XIIa activates factor XI to factor XIa. The sequence is that of Coagulation factor XII (F12) from Cavia porcellus (Guinea pig).